Reading from the N-terminus, the 878-residue chain is Phosphoenolpyruvate carboxylase (878 aa).

Catalysis depends on residues His-137 and Lys-545.

It belongs to the PEPCase type 1 family. Mg(2+) is required as a cofactor.

The enzyme catalyses oxaloacetate + phosphate = phosphoenolpyruvate + hydrogencarbonate. In terms of biological role, forms oxaloacetate, a four-carbon dicarboxylic acid source for the tricarboxylic acid cycle. The chain is Phosphoenolpyruvate carboxylase from Yersinia pestis bv. Antiqua (strain Antiqua).